The chain runs to 204 residues: Tetraspanin-13 (204 aa).

The Cytoplasmic portion of the chain corresponds to 1–19; it reads MVCGGFSCSKNCLCALNLL. A helical transmembrane segment spans residues 20 to 40; sequence YTLVSLLLIGIAAWGIGFGLI. The Extracellular portion of the chain corresponds to 41-44; sequence SSLR. Residues 45-65 form a helical membrane-spanning segment; it reads VVGVVIAVGIFLFLIALVGLI. The Cytoplasmic portion of the chain corresponds to 66–72; that stretch reads GAVKHHQ. The chain crosses the membrane as a helical span at residues 73-93; that stretch reads VLLFFYMIILLLVFIVQFSVS. At 94–167 the chain is on the extracellular side; it reads CACLALNREQ…IGEYAGEVLR (74 aa). Asparagine 113 and asparagine 137 each carry an N-linked (GlcNAc...) asparagine glycan. A Phosphoserine modification is found at serine 143. A helical transmembrane segment spans residues 168-188; it reads FVGGIGLFFSFTEILGVWLTY. The Cytoplasmic portion of the chain corresponds to 189 to 204; that stretch reads RYRNQKDPRANPSAFL.

This sequence belongs to the tetraspanin (TM4SF) family.

The protein resides in the membrane. The chain is Tetraspanin-13 (Tspan13) from Rattus norvegicus (Rat).